The following is a 413-amino-acid chain: L-arginine-specific L-amino acid ligase (413 aa).

The ATP-grasp domain maps to 115–312; it reads KTKLKMEGIP…LWESSLNISV (198 aa). 141-202 contacts ATP; the sequence is GEKLGWPIIV…EKCIEMEEFH (62 aa). Residues E268 and E281 each coordinate Mg(2+). 2 residues coordinate Mn(2+): E268 and E281.

In terms of assembly, homodimer. It depends on Mg(2+) as a cofactor. Requires Mn(2+) as cofactor. Co(2+) serves as cofactor.

It carries out the reaction an L-alpha-amino acid + L-arginine + ATP = L-arginyl-L-alpha-amino acid + ADP + phosphate + H(+). Catalyzes the synthesis of Arg-Xaa dipeptides in an ATP-dependent manner. Has strict specificity toward arginine as the N-terminal substrate. This chain is L-arginine-specific L-amino acid ligase, found in Bacillus subtilis.